The primary structure comprises 120 residues: Internal scaffolding protein B (120 aa).

The span at 1-23 (MEQLTKNQAVATSQEAFQNQNEP) shows a compositional bias: polar residues. Residues 1–64 (MEQLTKNQAV…PDIEAERKKR (64 aa)) form a disordered region. 2 stretches are compositionally biased toward basic and acidic residues: residues 24–36 (QLRD…DKSV) and 48–64 (LRRD…RKKR).

Belongs to the microviridae B protein family. Component of the procapsid complex composed of 60 copies of the internally located B, 240 copies of the external scaffolding protein D, 60 copies of each of the viral structural proteins F and G proteins, and 12 copies of H. Post-translationally, the proteolytic cleavage of the internal scaffolding protein B releases the scaffold protein in order to continue virion assembly.

The protein localises to the host cytoplasm. In terms of biological role, participates in the assembly of the viral procapsid in the cytoplasm. Forms first a 12S pre-assembly complex with protein H, and F and G pentamers, then twelve 12S complexes are joined by the D protein to form the procapsid. Internal scaffold protein B is released from the procapsid upon genome packaging. Autoproteolytic activity cleaves protein B and probably facilitates its removal through the pores of the procapsid. The sequence is that of Internal scaffolding protein B (B) from Enterobacteria phage S13 (Bacteriophage S13).